Here is a 297-residue protein sequence, read N- to C-terminus: Aspartate carbamoyltransferase catalytic subunit (297 aa).

Residues arginine 48 and threonine 49 each coordinate carbamoyl phosphate. Lysine 76 provides a ligand contact to L-aspartate. Carbamoyl phosphate-binding residues include arginine 98, histidine 129, and glutamine 132. Residues arginine 162 and arginine 214 each contribute to the L-aspartate site. Carbamoyl phosphate contacts are provided by alanine 257 and proline 258.

Belongs to the aspartate/ornithine carbamoyltransferase superfamily. ATCase family. As to quaternary structure, heterododecamer (2C3:3R2) of six catalytic PyrB chains organized as two trimers (C3), and six regulatory PyrI chains organized as three dimers (R2).

The enzyme catalyses carbamoyl phosphate + L-aspartate = N-carbamoyl-L-aspartate + phosphate + H(+). Its pathway is pyrimidine metabolism; UMP biosynthesis via de novo pathway; (S)-dihydroorotate from bicarbonate: step 2/3. Functionally, catalyzes the condensation of carbamoyl phosphate and aspartate to form carbamoyl aspartate and inorganic phosphate, the committed step in the de novo pyrimidine nucleotide biosynthesis pathway. This Leuconostoc mesenteroides subsp. mesenteroides (strain ATCC 8293 / DSM 20343 / BCRC 11652 / CCM 1803 / JCM 6124 / NCDO 523 / NBRC 100496 / NCIMB 8023 / NCTC 12954 / NRRL B-1118 / 37Y) protein is Aspartate carbamoyltransferase catalytic subunit.